A 777-amino-acid polypeptide reads, in one-letter code: Phosphoribosylformylglycinamidine synthase subunit PurL (777 aa).

The active site involves H50. Y53 and K92 together coordinate ATP. E94 contacts Mg(2+). Residues S95–H98 and R117 each bind substrate. H96 serves as the catalytic Proton acceptor. D118 contributes to the Mg(2+) binding site. Residue Q241 participates in substrate binding. D269 lines the Mg(2+) pocket. Position 313–315 (E313–Q315) interacts with substrate. D516 and G553 together coordinate ATP. N554 provides a ligand contact to Mg(2+). S556 serves as a coordination point for substrate.

The protein belongs to the FGAMS family. In terms of assembly, monomer. Part of the FGAM synthase complex composed of 1 PurL, 1 PurQ and 2 PurS subunits.

Its subcellular location is the cytoplasm. The catalysed reaction is N(2)-formyl-N(1)-(5-phospho-beta-D-ribosyl)glycinamide + L-glutamine + ATP + H2O = 2-formamido-N(1)-(5-O-phospho-beta-D-ribosyl)acetamidine + L-glutamate + ADP + phosphate + H(+). Its pathway is purine metabolism; IMP biosynthesis via de novo pathway; 5-amino-1-(5-phospho-D-ribosyl)imidazole from N(2)-formyl-N(1)-(5-phospho-D-ribosyl)glycinamide: step 1/2. Its function is as follows. Part of the phosphoribosylformylglycinamidine synthase complex involved in the purines biosynthetic pathway. Catalyzes the ATP-dependent conversion of formylglycinamide ribonucleotide (FGAR) and glutamine to yield formylglycinamidine ribonucleotide (FGAM) and glutamate. The FGAM synthase complex is composed of three subunits. PurQ produces an ammonia molecule by converting glutamine to glutamate. PurL transfers the ammonia molecule to FGAR to form FGAM in an ATP-dependent manner. PurS interacts with PurQ and PurL and is thought to assist in the transfer of the ammonia molecule from PurQ to PurL. The chain is Phosphoribosylformylglycinamidine synthase subunit PurL from Synechococcus elongatus (strain ATCC 33912 / PCC 7942 / FACHB-805) (Anacystis nidulans R2).